The following is a 500-amino-acid chain: Probable cytosol aminopeptidase (500 aa).

Mn(2+)-binding residues include Lys-269 and Asp-274. Residue Lys-281 is part of the active site. Positions 292, 351, and 353 each coordinate Mn(2+). Residue Arg-355 is part of the active site.

Belongs to the peptidase M17 family. Mn(2+) serves as cofactor.

Its subcellular location is the cytoplasm. It catalyses the reaction Release of an N-terminal amino acid, Xaa-|-Yaa-, in which Xaa is preferably Leu, but may be other amino acids including Pro although not Arg or Lys, and Yaa may be Pro. Amino acid amides and methyl esters are also readily hydrolyzed, but rates on arylamides are exceedingly low.. The catalysed reaction is Release of an N-terminal amino acid, preferentially leucine, but not glutamic or aspartic acids.. Presumably involved in the processing and regular turnover of intracellular proteins. Catalyzes the removal of unsubstituted N-terminal amino acids from various peptides. The sequence is that of Probable cytosol aminopeptidase from Acidithiobacillus ferrooxidans (strain ATCC 23270 / DSM 14882 / CIP 104768 / NCIMB 8455) (Ferrobacillus ferrooxidans (strain ATCC 23270)).